A 117-amino-acid chain; its full sequence is Ribonuclease P protein component (117 aa).

This sequence belongs to the RnpA family. In terms of assembly, consists of a catalytic RNA component (M1 or rnpB) and a protein subunit.

It catalyses the reaction Endonucleolytic cleavage of RNA, removing 5'-extranucleotides from tRNA precursor.. Its function is as follows. RNaseP catalyzes the removal of the 5'-leader sequence from pre-tRNA to produce the mature 5'-terminus. It can also cleave other RNA substrates such as 4.5S RNA. The protein component plays an auxiliary but essential role in vivo by binding to the 5'-leader sequence and broadening the substrate specificity of the ribozyme. This chain is Ribonuclease P protein component, found in Limosilactobacillus reuteri subsp. reuteri (strain JCM 1112) (Lactobacillus reuteri).